A 102-amino-acid chain; its full sequence is A-type ATP synthase subunit F (102 aa).

Belongs to the V-ATPase F subunit family. In terms of assembly, has multiple subunits with at least A(3), B(3), C, D, E, F, H, I and proteolipid K(x).

The protein resides in the cell membrane. In terms of biological role, component of the A-type ATP synthase that produces ATP from ADP in the presence of a proton gradient across the membrane. This chain is A-type ATP synthase subunit F, found in Thermococcus kodakarensis (strain ATCC BAA-918 / JCM 12380 / KOD1) (Pyrococcus kodakaraensis (strain KOD1)).